The chain runs to 365 residues: tRNA/tmRNA (uracil-C(5))-methyltransferase (365 aa).

Residues Gln189, Tyr217, Asn222, Glu238, and Asp298 each contribute to the S-adenosyl-L-methionine site. Cys323 functions as the Nucleophile in the catalytic mechanism. Catalysis depends on Glu357, which acts as the Proton acceptor.

It belongs to the class I-like SAM-binding methyltransferase superfamily. RNA M5U methyltransferase family. TrmA subfamily.

It carries out the reaction uridine(54) in tRNA + S-adenosyl-L-methionine = 5-methyluridine(54) in tRNA + S-adenosyl-L-homocysteine + H(+). It catalyses the reaction uridine(341) in tmRNA + S-adenosyl-L-methionine = 5-methyluridine(341) in tmRNA + S-adenosyl-L-homocysteine + H(+). In terms of biological role, dual-specificity methyltransferase that catalyzes the formation of 5-methyluridine at position 54 (m5U54) in all tRNAs, and that of position 341 (m5U341) in tmRNA (transfer-mRNA). The protein is tRNA/tmRNA (uracil-C(5))-methyltransferase of Shewanella baltica (strain OS185).